Reading from the N-terminus, the 31-residue chain is Cytochrome b6-f complex subunit 6 (31 aa).

The chain crosses the membrane as a helical span at residues 4 to 26 (ITSYFGFLLAASTITSALLIGLS).

It belongs to the PetL family. In terms of assembly, the 4 large subunits of the cytochrome b6-f complex are cytochrome b6, subunit IV (17 kDa polypeptide, PetD), cytochrome f and the Rieske protein, while the 4 small subunits are PetG, PetL, PetM and PetN. The complex functions as a dimer.

It is found in the plastid. The protein resides in the chloroplast thylakoid membrane. Functionally, component of the cytochrome b6-f complex, which mediates electron transfer between photosystem II (PSII) and photosystem I (PSI), cyclic electron flow around PSI, and state transitions. PetL is important for photoautotrophic growth as well as for electron transfer efficiency and stability of the cytochrome b6-f complex. The sequence is that of Cytochrome b6-f complex subunit 6 from Chloranthus spicatus (Chulantree).